Here is a 160-residue protein sequence, read N- to C-terminus: Nucleotide-binding protein CPS_1098 (160 aa).

It belongs to the YajQ family.

Nucleotide-binding protein. In Colwellia psychrerythraea (strain 34H / ATCC BAA-681) (Vibrio psychroerythus), this protein is Nucleotide-binding protein CPS_1098.